The chain runs to 62 residues: Protein YmcF (62 aa).

It belongs to the YmcF/YnqF peptide family.

In Escherichia coli (strain K12), this protein is Protein YmcF.